Reading from the N-terminus, the 405-residue chain is Putative phosphate permease PYRAB14010 (405 aa).

The next 11 helical transmembrane spans lie at 3–23 (MDPW…AIGA), 44–64 (AVLI…KTVT), 82–102 (VLVY…VIAT), 114–134 (IIGG…VNWG), 138–158 (SVVL…FFIF), 181–201 (VWIG…VLHG), 207–227 (GVLK…SMIL), 264–284 (VANA…GMAG), 287–307 (VPVP…GVAT), 329–349 (FTID…GMPI), and 384–404 (FVTV…LWIV).

The protein belongs to the inorganic phosphate transporter (PiT) (TC 2.A.20) family.

It localises to the cell membrane. Potential transporter for phosphate. The chain is Putative phosphate permease PYRAB14010 from Pyrococcus abyssi (strain GE5 / Orsay).